The following is a 293-amino-acid chain: Phosphate import ATP-binding protein PstB (293 aa).

In terms of domain architecture, ABC transporter spans 46–288; it reads FGIRGVDVFY…PDHELTEAYI (243 aa). 78–85 contacts ATP; the sequence is GPSGCGKS.

The protein belongs to the ABC transporter superfamily. Phosphate importer (TC 3.A.1.7) family. In terms of assembly, the complex is composed of two ATP-binding proteins (PstB), two transmembrane proteins (PstC and PstA) and a solute-binding protein (PstS).

It localises to the cell inner membrane. The catalysed reaction is phosphate(out) + ATP + H2O = ADP + 2 phosphate(in) + H(+). Its function is as follows. Part of the ABC transporter complex PstSACB involved in phosphate import. Responsible for energy coupling to the transport system. The sequence is that of Phosphate import ATP-binding protein PstB from Saccharophagus degradans (strain 2-40 / ATCC 43961 / DSM 17024).